Here is a 69-residue protein sequence, read N- to C-terminus: uncharacterized protein (69 aa).

Disordered regions lie at residues 1 to 32 (MSAP…GWGD) and 44 to 69 (QSDA…APSD). Composition is skewed to basic and acidic residues over residues 7-32 (NLDR…GWGD) and 46-69 (DADK…APSD).

This is an uncharacterized protein from Schizosaccharomyces pombe (strain 972 / ATCC 24843) (Fission yeast).